The following is a 539-amino-acid chain: Glycerophosphoinositol inositolphosphodiesterase GDPD2 (539 aa).

Residues 1–40 lie on the Cytoplasmic side of the membrane; that stretch reads MADSPGCCSIWARCLHCLYSCHWRKYPKQKMQTSKCDCIW. The helical transmembrane segment at 41–61 threads the bilayer; that stretch reads FGLLFLTFLLSLGWLYIGLIL. The Extracellular portion of the chain corresponds to 62-83; that stretch reads LNDLHNFNEFLFRHWGHWMDWS. Residues 84–104 form a helical membrane-spanning segment; that stretch reads LIVLLVVSLLVTYASLLLLLG. Topologically, residues 105-121 are cytoplasmic; that stretch reads LLLQLCGQPLHLHSLHK. The helical transmembrane segment at 122–142 threads the bilayer; the sequence is VLLLLIVLLVAAGLVGLDIQW. Residues 143–154 are Extracellular-facing; the sequence is RQEWHSLRLSLQ. The chain crosses the membrane as a helical span at residues 155-175; it reads ATAPFLHIGAVAGITLLAWPV. Over 176 to 189 the chain is Cytoplasmic; that stretch reads ADTFYRIHPRGPKV. Residues 190–210 form a helical membrane-spanning segment; sequence LLLLLFFGVTLVIYLMPLLFI. Over 211–491 the chain is Extracellular; that stretch reads SSPCIMKLRD…PLWLLPPQKY (281 aa). Positions 225 to 480 constitute a GP-PDE domain; sequence PGLVGHRGAP…NACQLLQQMQ (256 aa). Positions 257, 259, and 272 each coordinate a divalent metal cation. Asn-333 carries an N-linked (GlcNAc...) asparagine glycan. A helical transmembrane segment spans residues 492–512; it reads LMIWVITDCASILLLLSIFLL. The Cytoplasmic portion of the chain corresponds to 513-539; that stretch reads RGGCAKRNRTGLETAVLLTKINNFASE.

It belongs to the glycerophosphoryl diester phosphodiesterase family. Requires Ca(2+) as cofactor. As to expression, detected in spleen, femur and calvaria.

Its subcellular location is the cell membrane. The protein resides in the cytoplasm. It is found in the cytoskeleton. It catalyses the reaction sn-glycero-3-phospho-1D-myo-inositol + H2O = 1D-myo-inositol 1-phosphate + glycerol + H(+). Functionally, has glycerophosphoinositol inositolphosphodiesterase activity and specifically hydrolyzes glycerophosphoinositol, with no activity for other substrates such as glycerophosphoinositol 4-phosphate, glycerophosphocholine, glycerophosphoethanolamine, and glycerophosphoserine. Accelerates the program of osteoblast differentiation and growth. May play a role in remodeling of the actin cytoskeleton. This chain is Glycerophosphoinositol inositolphosphodiesterase GDPD2 (Gdpd2), found in Mus musculus (Mouse).